The primary structure comprises 1159 residues: WASH complex subunit 5 (1159 aa).

At serine 917 the chain carries Phosphoserine.

This sequence belongs to the strumpellin family. Component of the WASH core complex also described as WASH regulatory complex (SHRC) composed of WASH (WASHC1, WASH2P or WASH3P), WASHC2 (WASHC2A or WASHC2C), WASHC3, WASHC4 and WASHC5. The WASH core complex associates via WASHC2 with the F-actin-capping protein dimer (formed by CAPZA1, CAPZA2 or CAPZA3 and CAPZB) in a transient or substoichiometric manner which was initially described as WASH complex. Interacts with VCP, PI4K2A.

It is found in the cytoplasm. The protein localises to the cytosol. The protein resides in the endoplasmic reticulum. It localises to the early endosome. Its function is as follows. Acts as a component of the WASH core complex that functions as a nucleation-promoting factor (NPF) at the surface of endosomes, where it recruits and activates the Arp2/3 complex to induce actin polymerization, playing a key role in the fission of tubules that serve as transport intermediates during endosome sorting. May be involved in axonal outgrowth. Involved in cellular localization of ADRB2. Involved in cellular trafficking of BLOC-1 complex cargos such as ATP7A and VAMP7. This is WASH complex subunit 5 from Pongo abelii (Sumatran orangutan).